The primary structure comprises 535 residues: MAALGCARLRWALLGPRVAGCGLCPQGARAKAAIPTALPADEAAQAPGAGPGDRRRRRSLEELPRLGQLRFFYQAFVQGYLLHLHKLQVLNKARYGPMWVSYLGPQLFVNLASAPLVETVMRQEGKYPVRNDMQLWKEHRDHQDLAYGVFTTDGHDWYQLRQALNQRLLKPAEAALYTDALNEVIDSFVVRLDQLRAESASGDQVPDMADLLYHFALEAICYILFEKRIGCLEASIPKDTENFIRSVGLMFQNSVYVTFLPKWTRPLLPFWKRYLDGWDTIFSFGKNLIDQKLQEVVAQLQSAGSDGVQVSGYLHSLLTSGQLSPREALGSLPELLLAGVDTTSNTLTWALYHLSKNPEIQAALRKEVVGVVAAGQVPQHKDFAHMPLLKAVLKETLRLYPVIPANSRIIVDKEIEVGGFLFPKNTQFVFCHYVTSRDPSTFSEPDTFWPYRWLRKGQPETSKTQHPFGSVPFGYGVRACLGRRIAELEMQLLLARLIQRYELMLAPETGEVQSVARIVLVPNKKVGLRFLPTQR.

The transit peptide at 1–36 (MAALGCARLRWALLGPRVAGCGLCPQGARAKAAIPT) directs the protein to the mitochondrion. Lys286 carries the N6-acetyllysine modification. The sterol-binding stretch occupies residues 387-401 (PLLKAVLKETLRLYP). Cys480 lines the heme pocket. At Lys524 the chain carries N6-acetyllysine.

The protein belongs to the cytochrome P450 family. As to quaternary structure, interacts with HSP70; this interaction is required for initial targeting to mitochondria. The cofactor is heme. As to expression, expressed in all tissues tested. Highest expression in liver and duodenum, followed by adrenal gland and lung. Low expression in kidney and spleen.

It localises to the mitochondrion inner membrane. It carries out the reaction 5beta-cholestane-3alpha,7alpha,12alpha-triol + 6 reduced [adrenodoxin] + 3 O2 + 5 H(+) = (25R)-3alpha,7alpha,12alpha-trihydroxy-5beta-cholestan-26-oate + 6 oxidized [adrenodoxin] + 4 H2O. The catalysed reaction is cholestanol + 2 reduced [adrenodoxin] + O2 + 2 H(+) = (25R)-26-hydroxycholestanol + 2 oxidized [adrenodoxin] + H2O. The enzyme catalyses (25R)-3beta-hydroxycholest-5-en-7-one-26-al + 2 reduced [adrenodoxin] + O2 + H(+) = (25R)-3beta-hydroxycholest-5-en-7-one-26-oate + 2 oxidized [adrenodoxin] + H2O. It catalyses the reaction (25R)-3beta,26-dihydroxycholest-5-en-7-one + 2 reduced [adrenodoxin] + O2 + 2 H(+) = (25R)-3beta-hydroxycholest-5-en-7-one-26-al + 2 oxidized [adrenodoxin] + 2 H2O. It carries out the reaction 7-oxocholesterol + 2 reduced [adrenodoxin] + O2 + 2 H(+) = (25R)-3beta,26-dihydroxycholest-5-en-7-one + 2 oxidized [adrenodoxin] + H2O. The catalysed reaction is calciol + 2 reduced [adrenodoxin] + O2 + 2 H(+) = calcidiol + 2 oxidized [adrenodoxin] + H2O. The enzyme catalyses (25R)-5beta-cholestane-3alpha,7alpha,12alpha,26-tetrol + 2 reduced [adrenodoxin] + O2 + 2 H(+) = (25R)-3alpha,7alpha,12alpha-trihydroxy-5beta-cholestan-26-al + 2 oxidized [adrenodoxin] + 2 H2O. It catalyses the reaction 2 reduced [adrenodoxin] + cholesterol + O2 + 2 H(+) = (25R)-cholest-5-ene-3beta,26-diol + 2 oxidized [adrenodoxin] + H2O. It carries out the reaction (25R)-3beta,4beta-dihydroxycholest-5-en-26-al + 2 reduced [adrenodoxin] + O2 + H(+) = (25R)-3beta,4beta-dihydroxycholest-5-en-26-oate + 2 oxidized [adrenodoxin] + H2O. The catalysed reaction is (25R)-4beta,26-dihydroxycholesterol + 2 reduced [adrenodoxin] + O2 + 2 H(+) = (25R)-3beta,4beta-dihydroxycholest-5-en-26-al + 2 oxidized [adrenodoxin] + 2 H2O. The enzyme catalyses 4beta-hydroxycholesterol + 2 reduced [adrenodoxin] + O2 + 2 H(+) = (25R)-4beta,26-dihydroxycholesterol + 2 oxidized [adrenodoxin] + H2O. It catalyses the reaction (25R)-3beta-hydroxy-5-cholesten-26-al + 2 reduced [adrenodoxin] + O2 + H(+) = (25R)-3beta-hydroxy-5-cholestenoate + 2 oxidized [adrenodoxin] + H2O. It carries out the reaction (25R)-cholest-5-ene-3beta,26-diol + 2 reduced [adrenodoxin] + O2 + 2 H(+) = (25R)-3beta-hydroxy-5-cholesten-26-al + 2 oxidized [adrenodoxin] + 2 H2O. The catalysed reaction is (25R)-3alpha,7alpha,12alpha-trihydroxy-5beta-cholestan-26-al + 2 reduced [adrenodoxin] + O2 + H(+) = (25R)-3alpha,7alpha,12alpha-trihydroxy-5beta-cholestan-26-oate + 2 oxidized [adrenodoxin] + H2O. The enzyme catalyses 5beta-cholestane-3alpha,7alpha,12alpha-triol + 2 reduced [adrenodoxin] + O2 + 2 H(+) = (25R)-5beta-cholestane-3alpha,7alpha,12alpha,26-tetrol + 2 oxidized [adrenodoxin] + H2O. It participates in hormone biosynthesis; cholecalciferol biosynthesis. Its pathway is steroid metabolism; cholesterol degradation. The protein operates within lipid metabolism; bile acid biosynthesis. Cytochrome P450 monooxygenase that catalyzes regio- and stereospecific hydroxylation of cholesterol and its derivatives. Hydroxylates (with R stereochemistry) the terminal methyl group of cholesterol side-chain in a three step reaction to yield at first a C26 alcohol, then a C26 aldehyde and finally a C26 acid. Regulates cholesterol homeostasis by catalyzing the conversion of excess cholesterol to bile acids via both the 'neutral' (classic) and the 'acid' (alternative) pathways. May also regulate cholesterol homeostasis via generation of active oxysterols, which act as ligands for NR1H2 and NR1H3 nuclear receptors, modulating the transcription of genes involved in lipid metabolism. Plays a role in cholestanol metabolism in the cerebellum. Similarly to cholesterol, hydroxylates cholestanol and may facilitate sterol diffusion through the blood-brain barrier to the systemic circulation for further degradation. Also hydroxylates retinal 7-ketocholesterol, a noxious oxysterol with pro-inflammatory and pro-apoptotic effects, and may play a role in its elimination from the retinal pigment epithelium. May play a redundant role in vitamin D biosynthesis. Catalyzes 25-hydroxylation of vitamin D3 that is required for its conversion to a functionally active form. This is Sterol 26-hydroxylase, mitochondrial (CYP27A1) from Oryctolagus cuniculus (Rabbit).